Reading from the N-terminus, the 409-residue chain is S-adenosylmethionine synthase (409 aa).

Position 15 (histidine 15) interacts with ATP. Aspartate 17 is a binding site for Mg(2+). Glutamate 43 is a K(+) binding site. Positions 56 and 100 each coordinate L-methionine. The tract at residues 100–110 (QSSDIAQGVNE) is flexible loop. ATP-binding positions include 171–173 (DGK), 248–249 (KF), aspartate 257, 263–264 (RK), alanine 280, and lysine 284. Aspartate 257 serves as a coordination point for L-methionine. Lysine 288 lines the L-methionine pocket.

The protein belongs to the AdoMet synthase family. Homotetramer; dimer of dimers. The cofactor is Mg(2+). Requires K(+) as cofactor.

The protein resides in the cytoplasm. The enzyme catalyses L-methionine + ATP + H2O = S-adenosyl-L-methionine + phosphate + diphosphate. Its pathway is amino-acid biosynthesis; S-adenosyl-L-methionine biosynthesis; S-adenosyl-L-methionine from L-methionine: step 1/1. Functionally, catalyzes the formation of S-adenosylmethionine (AdoMet) from methionine and ATP. The overall synthetic reaction is composed of two sequential steps, AdoMet formation and the subsequent tripolyphosphate hydrolysis which occurs prior to release of AdoMet from the enzyme. This is S-adenosylmethionine synthase from Prochlorococcus marinus (strain NATL1A).